We begin with the raw amino-acid sequence, 298 residues long: Movement protein BC1 (298 aa).

A disordered region spans residues 253-273 (LPEASLDPGDSVSQTQSMTKK).

The protein belongs to the begomovirus movement protein BC1 family. In terms of assembly, binds to dimeric supercoiled plasmid DNA. Phosphorylated.

It is found in the host cell membrane. The protein resides in the host microsome membrane. It localises to the host endoplasmic reticulum membrane. Functionally, transports viral genome to neighboring plant cells directly through plasmosdesmata, without any budding. The movement protein allows efficient cell to cell propagation, by bypassing the host cell wall barrier. Begomovirus genome is shuttled out of nucleus by Nuclear shuttle protein (NSP) and the movement protein transports the DNA-NSP complex to cell plasmodesmata and facilitates further movement across the cell wall. This chain is Movement protein BC1, found in Hewittia sublobata (Coralbush).